The following is a 443-amino-acid chain: UPF0656 protein C926.02 (443 aa).

It belongs to the UPF0656 family.

Its subcellular location is the cytoplasm. It is found in the nucleus. This chain is UPF0656 protein C926.02, found in Schizosaccharomyces pombe (strain 972 / ATCC 24843) (Fission yeast).